We begin with the raw amino-acid sequence, 129 residues long: Small ribosomal subunit protein uS8 (129 aa).

It belongs to the universal ribosomal protein uS8 family. As to quaternary structure, part of the 30S ribosomal subunit. Contacts proteins S5 and S12.

Functionally, one of the primary rRNA binding proteins, it binds directly to 16S rRNA central domain where it helps coordinate assembly of the platform of the 30S subunit. This Mycoplasma capricolum subsp. capricolum (strain California kid / ATCC 27343 / NCTC 10154) protein is Small ribosomal subunit protein uS8.